The primary structure comprises 185 residues: Elongation factor P (185 aa).

This sequence belongs to the elongation factor P family.

The protein resides in the cytoplasm. Its pathway is protein biosynthesis; polypeptide chain elongation. In terms of biological role, involved in peptide bond synthesis. Stimulates efficient translation and peptide-bond synthesis on native or reconstituted 70S ribosomes in vitro. Probably functions indirectly by altering the affinity of the ribosome for aminoacyl-tRNA, thus increasing their reactivity as acceptors for peptidyl transferase. The protein is Elongation factor P of Nitratidesulfovibrio vulgaris (strain DSM 19637 / Miyazaki F) (Desulfovibrio vulgaris).